Here is a 99-residue protein sequence, read N- to C-terminus: Cell division topological specificity factor (99 aa).

This sequence belongs to the MinE family.

In terms of biological role, prevents the cell division inhibition by proteins MinC and MinD at internal division sites while permitting inhibition at polar sites. This ensures cell division at the proper site by restricting the formation of a division septum at the midpoint of the long axis of the cell. The protein is Cell division topological specificity factor of Tolumonas auensis (strain DSM 9187 / NBRC 110442 / TA 4).